We begin with the raw amino-acid sequence, 262 residues long: F-actin-capping protein subunit alpha (262 aa).

Belongs to the F-actin-capping protein alpha subunit family. Heterodimer of an alpha and a beta subunit.

It localises to the cytoplasm. It is found in the cytoskeleton. F-actin-capping proteins bind in a Ca(2+)-independent manner to the fast growing ends of actin filaments (barbed end) thereby blocking the exchange of subunits at these ends. Unlike other capping proteins (such as gelsolin and severin), these proteins do not sever actin filaments. This chain is F-actin-capping protein subunit alpha (CAP1), found in Yarrowia lipolytica (strain CLIB 122 / E 150) (Yeast).